We begin with the raw amino-acid sequence, 304 residues long: Putative metal ion transporter ZIPCO (304 aa).

8 consecutive transmembrane segments (helical) span residues Met-1–Leu-21, Val-46–Leu-66, Ile-74–Leu-94, Phe-158–Leu-178, Pro-183–Tyr-203, Ile-218–Phe-238, Phe-243–Met-263, and Phe-275–Phe-295.

The protein localises to the cell membrane. Its function is as follows. Putative transporter for the divalent zinc and iron cations. Required for the development of liver-stage parasites. This Plasmodium berghei (strain Anka) protein is Putative metal ion transporter ZIPCO.